A 1093-amino-acid polypeptide reads, in one-letter code: Non-canonical non-ribosomal peptide synthetase ascB (1093 aa).

The span at M1–G26 shows a compositional bias: low complexity. Residues M1 to I27 are disordered. The tract at residues E35–N392 is adenylation (A) domain. Residues D591 to S678 enclose the Carrier domain. Position 627 is an O-(pantetheine 4'-phosphoryl)serine (S627). The segment at L721–V971 is thioester reductase (TR) domain.

It belongs to the NRP synthetase family.

The catalysed reaction is ilicicolinate B + AH2 + ATP = ilicicolin B + A + AMP + diphosphate. The protein operates within secondary metabolite biosynthesis; terpenoid biosynthesis. Non-canonical non-ribosomal peptide synthetase; part of the asc-1 gene cluster that mediates the biosynthesis of both ascochlorin and ascofuranone, a strong inhibitor of cyanide-insensitive alternative oxidases and a promising drug candidate against African trypanosomiasis. The first step in the pathway is performed by the non-reducing polyketide synthase ascC that produces orsellinic acid by condensing acetyl-CoA with 3 malonyl-CoA units. Orsellinic acid is then prenylated by the prenyltransferase ascA to yield ilicicolinic acid B. Ilicicolinic acid B is further reduced to ilicicolin B by the reductase ascB. The halogenase ascD then chlorinates ilicicolin B to produce ilicicolin A which is converted to ilicicolin A epoxide by the cytochrome P450 monooxygenase ascE that catalyzes stereoselective epoxidation of the terminal double bond of the prenyl group. Ilicicolin A epoxide is the last common precursor for the biosynthesis of ascofuranone and ascochlorin. The terpene cyclase ascF produces a monocyclic terpene, and the cyclization reaction is proposed to be initiated by protonation of the terminal epoxide of ilicicolin A epoxide to generate a monocyclic tertiarycation, which is followed by a series of hydride and methyl shifts with abstraction of proton, leading to the formation of the (14S,15R,19R)-trimethylcyclohexanone ring structure of ilicicolin C, which is finally reduced to ascochlorin by the dehydrogenase ascG. On the other hand, ilicicolin A epoxide is hydroxylated by the cytochrome P450 monooxygenase ascH, and the resultant product is cyclized by the terpene cyclase ascI to ascofuranol via protonation-initiated epoxide ring opening, which facilitates the 6-endo-tet cyclization to form the tetrahy-drofuran ring. Finally, ascofuranol is oxidized into ascofuranone by ascJ. The polypeptide is Non-canonical non-ribosomal peptide synthetase ascB (Acremonium egyptiacum (Oospora egyptiaca)).